The chain runs to 86 residues: Large ribosomal subunit protein uL23 (86 aa).

This sequence belongs to the universal ribosomal protein uL23 family. Part of the 50S ribosomal subunit. Contacts protein L29.

In terms of biological role, binds to 23S rRNA. One of the proteins that surrounds the polypeptide exit tunnel on the outside of the ribosome. This Methanosphaera stadtmanae (strain ATCC 43021 / DSM 3091 / JCM 11832 / MCB-3) protein is Large ribosomal subunit protein uL23.